The primary structure comprises 158 residues: Endoribonuclease YbeY (158 aa).

Zn(2+)-binding residues include His-119, His-123, and His-129.

This sequence belongs to the endoribonuclease YbeY family. It depends on Zn(2+) as a cofactor.

It is found in the cytoplasm. In terms of biological role, single strand-specific metallo-endoribonuclease involved in late-stage 70S ribosome quality control and in maturation of the 3' terminus of the 16S rRNA. This Acinetobacter baumannii (strain ACICU) protein is Endoribonuclease YbeY.